Here is a 393-residue protein sequence, read N- to C-terminus: Formate-dependent phosphoribosylglycinamide formyltransferase (393 aa).

N(1)-(5-phospho-beta-D-ribosyl)glycinamide is bound by residues 15 to 16 (EL) and Glu75. Residues Arg107, Lys148, 153 to 158 (SSGKGQ), 188 to 191 (EEYI), and Glu196 each bind ATP. One can recognise an ATP-grasp domain in the interval 112 to 302 (NLAAEKLAIK…EFELHLRAIL (191 aa)). 2 residues coordinate Mg(2+): Glu261 and Glu273. Residues Asp280, Lys350, and 357-358 (RR) contribute to the N(1)-(5-phospho-beta-D-ribosyl)glycinamide site.

This sequence belongs to the PurK/PurT family. In terms of assembly, homodimer.

The enzyme catalyses N(1)-(5-phospho-beta-D-ribosyl)glycinamide + formate + ATP = N(2)-formyl-N(1)-(5-phospho-beta-D-ribosyl)glycinamide + ADP + phosphate + H(+). It participates in purine metabolism; IMP biosynthesis via de novo pathway; N(2)-formyl-N(1)-(5-phospho-D-ribosyl)glycinamide from N(1)-(5-phospho-D-ribosyl)glycinamide (formate route): step 1/1. In terms of biological role, involved in the de novo purine biosynthesis. Catalyzes the transfer of formate to 5-phospho-ribosyl-glycinamide (GAR), producing 5-phospho-ribosyl-N-formylglycinamide (FGAR). Formate is provided by PurU via hydrolysis of 10-formyl-tetrahydrofolate. In Prochlorococcus marinus (strain SARG / CCMP1375 / SS120), this protein is Formate-dependent phosphoribosylglycinamide formyltransferase.